Consider the following 908-residue polypeptide: Protein translocase subunit SecA (908 aa).

ATP is bound by residues glutamine 87, 105-109, and aspartate 494; that span reads GEGKT. Positions 871–908 are disordered; that stretch reads QEFSGGNLNRSQSNGSSVTVTTSSGGGTERKTSRRRKR. Polar residues predominate over residues 874-884; that stretch reads SGGNLNRSQSN.

The protein belongs to the SecA family. Monomer and homodimer. Part of the essential Sec protein translocation apparatus which comprises SecA, SecYEG and auxiliary proteins SecDF. Other proteins may also be involved.

It localises to the cell inner membrane. It is found in the cytoplasm. The catalysed reaction is ATP + H2O + cellular proteinSide 1 = ADP + phosphate + cellular proteinSide 2.. Functionally, part of the Sec protein translocase complex. Interacts with the SecYEG preprotein conducting channel. Has a central role in coupling the hydrolysis of ATP to the transfer of proteins into and across the cell membrane, serving as an ATP-driven molecular motor driving the stepwise translocation of polypeptide chains across the membrane. The sequence is that of Protein translocase subunit SecA from Leptospira interrogans serogroup Icterohaemorrhagiae serovar Lai (strain 56601).